A 40-amino-acid polypeptide reads, in one-letter code: ANVLWLQGGAXSGNTMSFLNAEEPSAXDLVTDFGINVLXQ.

Requires Fe cation as cofactor.

The catalysed reaction is 2 Fe(III)-[cytochrome c3] + H2 = 2 Fe(II)-[cytochrome c3] + 2 H(+). This chain is Cytochrome c3 hydrogenase small chain (hoxK), found in Acidithiobacillus ferrooxidans (Thiobacillus ferrooxidans).